We begin with the raw amino-acid sequence, 180 residues long: MERKFLTDLGLNPDQVNSIMAQYGKDMQKYEGLEAERDALKKTSSELSNKIEDLKANSANIEDLTKQIEKLKLDNENATKQLSAQKLDFAVTSTIKDFGAKNAKAVKALLNHDDIRFDSKGNLTGLEEQLKSLKDSDSYLFAEDKPAGKPIQAFLRGTGSWRQGCQPASEDCTKIERINK.

The protein belongs to the SPP1-like scaffolding protein family. In terms of assembly, homodimer.

Its function is as follows. Scaffolding protein involved in the icosahedric procapsid assembly. Coassembles with the capsid proteins to form the procapsid, in which the scaffolding protein is found within the external shell of icosahedrally arranged capsid protein subunits. In a subsequent step the scaffolding protein molecules are released from the procapsid. The protein is Capsid assembly scaffolding protein (g20) of Lactococcus phage mv4 (Lactococcus delbrueckii bacteriophage mv4).